The chain runs to 158 residues: Cyclic pyranopterin monophosphate synthase (158 aa).

Substrate is bound by residues 75-77 (LCH) and 113-114 (ME). D128 is a catalytic residue.

It belongs to the MoaC family. As to quaternary structure, homohexamer; trimer of dimers.

It catalyses the reaction (8S)-3',8-cyclo-7,8-dihydroguanosine 5'-triphosphate = cyclic pyranopterin phosphate + diphosphate. Its pathway is cofactor biosynthesis; molybdopterin biosynthesis. In terms of biological role, catalyzes the conversion of (8S)-3',8-cyclo-7,8-dihydroguanosine 5'-triphosphate to cyclic pyranopterin monophosphate (cPMP). In Paraburkholderia xenovorans (strain LB400), this protein is Cyclic pyranopterin monophosphate synthase.